The chain runs to 836 residues: MWLLALCLVGLAGAQRGGGGPGGGAPGGPGLGLGSLGEERFPVVNTAYGRVRGVRRELNNEILGPVVQFLGVPYATPPLGARRFQPPEAPASWPGVRNATTLPPACPQNLHGALPAIMLPVWFTDNLEAAATYVQNQSEDCLYLNLYVPTEDGPLTKKRDEATLNPPDTDIRDSGKKPVMLFLHGGSYMEGTGNMFDGSVLAAYGNVIVATLNYRLGVLGFLSTGDQAAKGNYGLLDQIQALRWLSENIAHFGGDPERITIFGSGAGASCVNLLILSHHSEGLFQKAIAQSGTAISSWSVNYQPLKYTRLLAAKVGCDREDSTEAVECLRRKSSRELVDQDVQPARYHIAFGPVVDGDVVPDDPEILMQQGEFLNYDMLIGVNQGEGLKFVEDSAESEDGVSASAFDFTVSNFVDNLYGYPEGKDVLRETIKFMYTDWADRDNGEMRRKTLLALFTDHQWVAPAVATAKLHADYQSPVYFYTFYHHCQAEGRPEWADAAHGDELPYVFGVPMVGATDLFPCNFSKNDVMLSAVVMTYWTNFAKTGDPNQPVPQDTKFIHTKPNRFEEVVWSKFNSKEKQYLHIGLKPRVRDNYRANKVAFWLELVPHLHNLHTELFTTTTRLPPYATRWPPRTPGPGTSGTRRPPPPATLPPESDIDLGPRAYDRFPGDSRDYSTELSVTVAVGASLLFLNILAFAALYYKRDRRQELRCRRLSPPGGSGSGVPGGGPLLPTAGRELPPEEELVSLQLKRGGGVGADPAEALRPACPPDYTLALRRAPDDVPLLAPGALTLLPSGLGPPPPPPPPSLHPFGPFPPPPPTATSHNNTLPHPHSTTRV.

The first 14 residues, 1-14, serve as a signal peptide directing secretion; the sequence is MWLLALCLVGLAGA. At 15-678 the chain is on the extracellular side; it reads QRGGGGPGGG…DSRDYSTELS (664 aa). Residues Asn98 and Asn136 are each glycosylated (N-linked (GlcNAc...) asparagine). Disulfide bonds link Cys106-Cys141, Cys317-Cys328, and Cys487-Cys521. The N-linked (GlcNAc...) asparagine glycan is linked to Asn522. Residues 623-661 are disordered; that stretch reads PPYATRWPPRTPGPGTSGTRRPPPPATLPPESDIDLGPR. The helical transmembrane segment at 679–699 threads the bilayer; sequence VTVAVGASLLFLNILAFAALY. The tract at residues 679 to 699 is required for interaction with LHFPL4; sequence VTVAVGASLLFLNILAFAALY. Over 700–836 the chain is Cytoplasmic; it reads YKRDRRQELR…LPHPHSTTRV (137 aa). 2 disordered regions span residues 711 to 735 and 791 to 836; these read RRLSPPGGSGSGVPGGGPLLPTAGR and LLPS…TTRV. Phosphoserine is present on residues Ser714 and Ser719. Positions 717–728 are enriched in gly residues; that stretch reads GGSGSGVPGGGP. Positions 796 to 819 are enriched in pro residues; sequence LGPPPPPPPPSLHPFGPFPPPPPT. Polar residues predominate over residues 824–836; sequence NNTLPHPHSTTRV.

The protein belongs to the type-B carboxylesterase/lipase family. In terms of assembly, interacts with neurexins NRXN1, NRXN2 and NRXN3. Interaction with neurexins is mediated by heparan sulfate glycan modification on neurexin. Interacts (via its C-terminus) with DLG4/PSD-95 (via PDZ domain 3). Interacts with PATJ. Interacts with GPHN. Interacts with MDGA1 and MDGA2. Found in a complex with MAGI2 and IGSF9B, where it interacts with MAGI2 (via WW 1, WW 2 and PDZ 2 domains). Identified in a complex of 720 kDa composed of LHFPL4, NLGN2, GABRA1, GABRB2, GABRG2 and GABRB3. Interacts with LHFPL4; leading to mutual regulation of the protein level and synaptic clustering. Interacts with GABRA1. Detected on hippocampus neurons, especially at inhibitory synapses. Detected in retina, in the outer and inner plexiform layer. Detected in pancreas, in islet of Langerhans beta cells (at protein level). Expressed in brain, spinal cord and dorsal root ganglion. Detected in brain, and at lower levels in pancreas islet beta cells.

It localises to the cell membrane. Its subcellular location is the postsynaptic cell membrane. The protein resides in the presynaptic cell membrane. Its function is as follows. Transmembrane scaffolding protein involved in cell-cell interactions via its interactions with neurexin family members. Mediates cell-cell interactions both in neurons and in other types of cells, such as Langerhans beta cells. Plays a role in synapse function and synaptic signal transmission, especially via gamma-aminobutyric acid receptors (GABA(A) receptors). Functions by recruiting and clustering synaptic proteins. Promotes clustering of postsynaptic GABRG2 and GPHN. Promotes clustering of postsynaptic LHFPL4. Modulates signaling by inhibitory synapses, and thereby plays a role in controlling the ratio of signaling by excitatory and inhibitory synapses and information processing. Required for normal signal amplitude from inhibitory synapses, but is not essential for normal signal frequency. May promote the initial formation of synapses, but is not essential for this. In vitro, triggers the de novo formation of presynaptic structures. Mediates cell-cell interactions between Langerhans beta cells and modulates insulin secretion. The sequence is that of Neuroligin-2 (Nlgn2) from Rattus norvegicus (Rat).